Reading from the N-terminus, the 537-residue chain is Tyrosine-protein kinase Fyn (537 aa).

Gly-2 is lipidated: N-myristoyl glycine. S-palmitoyl cysteine attachment occurs at residues Cys-3 and Cys-6. Position 12 is a phosphothreonine; by PKC (Thr-12). The SH3 domain occupies 82-143 (TGVTLFVALY…PSNYVAPVDS (62 aa)). One can recognise an SH2 domain in the interval 149–246 (WYFGKLGRKD…GLCCRLVVPC (98 aa)). Positions 271 to 524 (LQLIKRLGNG…YLQGFLEDYF (254 aa)) constitute a Protein kinase domain. Residues 277 to 285 (LGNGQFGEV) and Lys-299 each bind ATP. Asp-390 functions as the Proton acceptor in the catalytic mechanism. Position 420 is a phosphotyrosine; by autocatalysis (Tyr-420). A Phosphotyrosine modification is found at Tyr-531.

This sequence belongs to the protein kinase superfamily. Tyr protein kinase family. SRC subfamily. As to quaternary structure, associates through its SH3 domain, to the p85 subunit of phosphatidylinositol 3-kinase. Mn(2+) serves as cofactor.

It carries out the reaction L-tyrosyl-[protein] + ATP = O-phospho-L-tyrosyl-[protein] + ADP + H(+). Its activity is regulated as follows. Inhibited by phosphorylation of Tyr-531 by leukocyte common antigen and activated by dephosphorylation of this site. In terms of biological role, tyrosine-protein kinase implicated in the control of cell growth. Plays a role in the regulation of intracellular calcium levels. Required in brain development and mature brain function with important roles in the regulation of axon growth, axon guidance, and neurite extension. Blocks axon outgrowth and attraction induced by ntn1 by phosphorylating its receptor ddc. This Xenopus laevis (African clawed frog) protein is Tyrosine-protein kinase Fyn (fyn).